The following is a 617-amino-acid chain: Protein DWARF AND LOW-TILLERING (617 aa).

2 disordered regions span residues 29–92 and 159–206; these read KRGS…HDED and PSLA…GVPA. Residues 171-187 show a composition bias toward low complexity; the sequence is KSPSDSSSSSGTDGGSS. Positions 208 to 594 constitute a GRAS domain; the sequence is GQAEREALEL…QPLYTVTAWT (387 aa). Positions 215–295 are leucine repeat I (LRI); sequence LELVRALTAC…LTDDAFGGGD (81 aa). A VHIID region spans residues 301-366; that stretch reads LRILNAITPI…VPPAHVRITG (66 aa). The VHIID motif lies at 332–336; sequence VHVID. The interval 376–408 is leucine repeat II (LRII); the sequence is ETGARLARVAAALGLAFEFHAVVDRLEDVRLWM. The PFYRE stretch occupies residues 417–508; it reads VAVNCVLAMH…EEMFAREIRN (92 aa). Residues 511–594 are SAW; that stretch reads AFEGPERFER…QPLYTVTAWT (84 aa). The interval 596-617 is disordered; the sequence is AGDGAGGSTVSASTTASHSQQS. The span at 603-617 shows a compositional bias: low complexity; it reads STVSASTTASHSQQS.

The protein belongs to the GRAS family. As to quaternary structure, interacts with GSK2. Interacts with SMOS1 (via C-terminus). Post-translationally, phosphorylated on serine and threonine residues by GSK2. Dephosphorylated during response to brassinosteroid. As to expression, expressed in the shoot apical meristem (SAM) and elongating cells of young seedlings. Expressed in leaf joints, culms, internodes, stems, young panicles, primary roots and lateral roots.

It localises to the nucleus. In terms of biological role, probable transcription factor that acts as a positive regulator of brassinosteroid (BR) signaling. Functions downstream of BRI1 and GSK2 to modulate BR responses. Acts as a direct target of GSK2 kinase to mediate BR responses. Involved in feedback inhibition of BR biosynthetic genes. Repressed by BZR1. Cooperatively functions in a transactivating complex with SMOS1 to enhance the transcription of the SMOS1 target PHI-1, and regulate plant organ size. Interaction between SMOS1 and DLT is a crosstalk point for auxin and brassinosteroid signaling. This Oryza sativa subsp. japonica (Rice) protein is Protein DWARF AND LOW-TILLERING.